The primary structure comprises 158 residues: Endoribonuclease YbeY (158 aa).

His119, His123, and Asp129 together coordinate Zn(2+).

It belongs to the endoribonuclease YbeY family. It depends on Zn(2+) as a cofactor.

The protein resides in the cytoplasm. Functionally, single strand-specific metallo-endoribonuclease involved in late-stage 70S ribosome quality control and in maturation of the 3' terminus of the 16S rRNA. This is Endoribonuclease YbeY from Chlamydia pneumoniae (Chlamydophila pneumoniae).